The chain runs to 153 residues: SsrA-binding protein (153 aa).

It belongs to the SmpB family.

The protein resides in the cytoplasm. Functionally, required for rescue of stalled ribosomes mediated by trans-translation. Binds to transfer-messenger RNA (tmRNA), required for stable association of tmRNA with ribosomes. tmRNA and SmpB together mimic tRNA shape, replacing the anticodon stem-loop with SmpB. tmRNA is encoded by the ssrA gene; the 2 termini fold to resemble tRNA(Ala) and it encodes a 'tag peptide', a short internal open reading frame. During trans-translation Ala-aminoacylated tmRNA acts like a tRNA, entering the A-site of stalled ribosomes, displacing the stalled mRNA. The ribosome then switches to translate the ORF on the tmRNA; the nascent peptide is terminated with the 'tag peptide' encoded by the tmRNA and targeted for degradation. The ribosome is freed to recommence translation, which seems to be the essential function of trans-translation. The sequence is that of SsrA-binding protein from Orientia tsutsugamushi (strain Ikeda) (Rickettsia tsutsugamushi).